Consider the following 380-residue polypeptide: Anhydro-N-acetylmuramic acid kinase (380 aa).

17-24 (GTSMDGAD) provides a ligand contact to ATP.

It belongs to the anhydro-N-acetylmuramic acid kinase family.

The enzyme catalyses 1,6-anhydro-N-acetyl-beta-muramate + ATP + H2O = N-acetyl-D-muramate 6-phosphate + ADP + H(+). The protein operates within amino-sugar metabolism; 1,6-anhydro-N-acetylmuramate degradation. It functions in the pathway cell wall biogenesis; peptidoglycan recycling. In terms of biological role, catalyzes the specific phosphorylation of 1,6-anhydro-N-acetylmuramic acid (anhMurNAc) with the simultaneous cleavage of the 1,6-anhydro ring, generating MurNAc-6-P. Is required for the utilization of anhMurNAc either imported from the medium or derived from its own cell wall murein, and thus plays a role in cell wall recycling. This chain is Anhydro-N-acetylmuramic acid kinase, found in Cupriavidus metallidurans (strain ATCC 43123 / DSM 2839 / NBRC 102507 / CH34) (Ralstonia metallidurans).